The primary structure comprises 160 residues: Sulfur-rich protein (160 aa).

A run of 2 helical transmembrane segments spans residues 63 to 83 (ITMVVLGIILLIAGLALTFVL) and 92 to 112 (FLFLIPAVIGLVKLLATSVCM).

It is found in the membrane. The sequence is that of Sulfur-rich protein (srp) from Chlamydophila psittaci (strain ATCC VR-125 / 6BC) (Chlamydia psittaci).